A 269-amino-acid polypeptide reads, in one-letter code: Putative hydro-lyase RL2444 (269 aa).

It belongs to the D-glutamate cyclase family.

In Rhizobium johnstonii (strain DSM 114642 / LMG 32736 / 3841) (Rhizobium leguminosarum bv. viciae), this protein is Putative hydro-lyase RL2444.